We begin with the raw amino-acid sequence, 441 residues long: Probable tRNA pseudouridine synthase D (441 aa).

Asp-89 functions as the Nucleophile in the catalytic mechanism. The 226-residue stretch at 168-393 folds into the TRUD domain; that stretch reads GVPNFFGVQR…SKGTRREVLL (226 aa).

The protein belongs to the pseudouridine synthase TruD family.

The catalysed reaction is uridine(13) in tRNA = pseudouridine(13) in tRNA. Could be responsible for synthesis of pseudouridine from uracil-13 in transfer RNAs. In Methanosarcina acetivorans (strain ATCC 35395 / DSM 2834 / JCM 12185 / C2A), this protein is Probable tRNA pseudouridine synthase D.